A 194-amino-acid chain; its full sequence is uncharacterized protein (194 aa).

Residues 1-29 (MKKAFLVFLSVVLVTTVFLVKQQESVAQA) form the signal peptide. Positions 104-131 (KVDELLKKAGQIVEEKVEAAKEIAASKD) form a coiled coil. The helical transmembrane segment at 149 to 171 (YFYYVSYVAAAGALILIILAIDI) threads the bilayer.

Its subcellular location is the membrane. This is an uncharacterized protein from Bacillus subtilis (strain 168).